A 293-amino-acid chain; its full sequence is NAD kinase (293 aa).

Residue aspartate 68 is the Proton acceptor of the active site. Residues 68–69 (DG), 142–143 (ND), arginine 153, aspartate 172, and 183–188 (TAYSLS) each bind NAD(+).

Belongs to the NAD kinase family. It depends on a divalent metal cation as a cofactor.

It is found in the cytoplasm. The enzyme catalyses NAD(+) + ATP = ADP + NADP(+) + H(+). Involved in the regulation of the intracellular balance of NAD and NADP, and is a key enzyme in the biosynthesis of NADP. Catalyzes specifically the phosphorylation on 2'-hydroxyl of the adenosine moiety of NAD to yield NADP. The sequence is that of NAD kinase from Lachnospira eligens (strain ATCC 27750 / DSM 3376 / VPI C15-48 / C15-B4) (Eubacterium eligens).